The primary structure comprises 1001 residues: Copper-transporting ATPase RAN1 (1001 aa).

Residues 1-21 (MAPSRRDLQLTPVTGGSSSQI) form a disordered region. Over 1–298 (MAPSRRDLQL…TGEASNMFRR (298 aa)) the chain is Cytoplasmic. Polar residues predominate over residues 11-21 (TPVTGGSSSQI). 2 HMA domains span residues 56–122 (RKIQ…FEAE) and 133–199 (LVGQ…FEGS). Residues Cys-67, Cys-70, Cys-144, and Cys-147 each coordinate Cu(+). One can recognise an HMA 3; degenerate domain in the interval 207-273 (DKLVLRVDGI…GIEEDGFGKF (67 aa)). Residues 299-320 (FISSLVLSIPLFFIQVICPHIA) traverse the membrane as a helical segment. Residues 321-338 (LFDALLVWRCGPFMMGDW) lie on the Extracellular side of the membrane. The helical transmembrane segment at 339 to 358 (LKWALVSVIQFVIGKRFYVA) threads the bilayer. The Cytoplasmic portion of the chain corresponds to 359-365 (AWRALRN). A helical membrane pass occupies residues 366-386 (GSTNMDVLVALGTSASYFYSV). The Extracellular segment spans residues 387–403 (GALLYGAVTGFWSPTYF). A helical membrane pass occupies residues 404–424 (DASAMLITFVLLGKYLESLAK). The Cytoplasmic segment spans residues 425–558 (GKTSDAMKKL…KAPIQKFADY (134 aa)). Residues 559-581 (VASIFVPVVITLALFTLVGWSIG) traverse the membrane as a helical segment. The Extracellular portion of the chain corresponds to 582–602 (GAVGAYPDEWLPENGTHFVFS). The chain crosses the membrane as a helical span at residues 603–620 (LMFSISVVVIACPCALGL). Topologically, residues 621–931 (ATPTAVMVAT…DLSRKTLTRI (311 aa)) are cytoplasmic. The 4-aspartylphosphate intermediate role is filled by Asp-658. Mg(2+)-binding residues include Asp-877 and Asp-881. Residues 932–951 (RLNYVFAMAYNVVSIPIAAG) form a helical membrane-spanning segment. Residues 952–963 (VFFPVLRVQLPP) lie on the Extracellular side of the membrane. Residues 964–982 (WAAGACMALSSVSVVCSSL) form a helical membrane-spanning segment. Over 983 to 1001 (LLRRYKKPRLTTVLKITTE) the chain is Cytoplasmic.

This sequence belongs to the cation transport ATPase (P-type) (TC 3.A.3) family. Type IB subfamily.

It localises to the membrane. The catalysed reaction is Cu(+)(in) + ATP + H2O = Cu(+)(out) + ADP + phosphate + H(+). In terms of biological role, involved in copper import into the cell. Essential for ethylene signaling, which requires copper. Acts by delivering copper to create functional hormone receptors. In Arabidopsis thaliana (Mouse-ear cress), this protein is Copper-transporting ATPase RAN1 (RAN1).